A 260-amino-acid chain; its full sequence is Indole-3-glycerol phosphate synthase (260 aa).

This sequence belongs to the TrpC family.

It carries out the reaction 1-(2-carboxyphenylamino)-1-deoxy-D-ribulose 5-phosphate + H(+) = (1S,2R)-1-C-(indol-3-yl)glycerol 3-phosphate + CO2 + H2O. It functions in the pathway amino-acid biosynthesis; L-tryptophan biosynthesis; L-tryptophan from chorismate: step 4/5. The chain is Indole-3-glycerol phosphate synthase from Thermoanaerobacter sp. (strain X514).